Here is a 138-residue protein sequence, read N- to C-terminus: Small ribosomal subunit protein uS11c (138 aa).

Residues 1–23 form a disordered region; it reads MAKPILRIGSRKNTRSGSRKNVR. Residues 9–23 show a composition bias toward basic residues; sequence GSRKNTRSGSRKNVR.

This sequence belongs to the universal ribosomal protein uS11 family. As to quaternary structure, part of the 30S ribosomal subunit.

The protein localises to the plastid. The protein resides in the chloroplast. This Aethionema grandiflorum (Persian stone-cress) protein is Small ribosomal subunit protein uS11c.